Reading from the N-terminus, the 340-residue chain is 4-hydroxy-3-methylbut-2-enyl diphosphate reductase (340 aa).

Residue Cys-13 participates in [4Fe-4S] cluster binding. His-42 and His-75 together coordinate (2E)-4-hydroxy-3-methylbut-2-enyl diphosphate. His-42 and His-75 together coordinate dimethylallyl diphosphate. The isopentenyl diphosphate site is built by His-42 and His-75. [4Fe-4S] cluster is bound at residue Cys-97. His-125 lines the (2E)-4-hydroxy-3-methylbut-2-enyl diphosphate pocket. Residue His-125 participates in dimethylallyl diphosphate binding. His-125 contacts isopentenyl diphosphate. Catalysis depends on Glu-127, which acts as the Proton donor. Thr-165 is a (2E)-4-hydroxy-3-methylbut-2-enyl diphosphate binding site. A [4Fe-4S] cluster-binding site is contributed by Cys-195. Residues Ser-223, Ser-224, Asn-225, and Ser-267 each coordinate (2E)-4-hydroxy-3-methylbut-2-enyl diphosphate. Positions 223, 224, 225, and 267 each coordinate dimethylallyl diphosphate. 4 residues coordinate isopentenyl diphosphate: Ser-223, Ser-224, Asn-225, and Ser-267. The interval 317–340 is disordered; that stretch reads NNLDNKTAASEEADSLSNDTEQEA. Positions 331-340 are enriched in polar residues; it reads SLSNDTEQEA.

The protein belongs to the IspH family. Requires [4Fe-4S] cluster as cofactor.

It catalyses the reaction isopentenyl diphosphate + 2 oxidized [2Fe-2S]-[ferredoxin] + H2O = (2E)-4-hydroxy-3-methylbut-2-enyl diphosphate + 2 reduced [2Fe-2S]-[ferredoxin] + 2 H(+). The enzyme catalyses dimethylallyl diphosphate + 2 oxidized [2Fe-2S]-[ferredoxin] + H2O = (2E)-4-hydroxy-3-methylbut-2-enyl diphosphate + 2 reduced [2Fe-2S]-[ferredoxin] + 2 H(+). It functions in the pathway isoprenoid biosynthesis; dimethylallyl diphosphate biosynthesis; dimethylallyl diphosphate from (2E)-4-hydroxy-3-methylbutenyl diphosphate: step 1/1. It participates in isoprenoid biosynthesis; isopentenyl diphosphate biosynthesis via DXP pathway; isopentenyl diphosphate from 1-deoxy-D-xylulose 5-phosphate: step 6/6. Catalyzes the conversion of 1-hydroxy-2-methyl-2-(E)-butenyl 4-diphosphate (HMBPP) into a mixture of isopentenyl diphosphate (IPP) and dimethylallyl diphosphate (DMAPP). Acts in the terminal step of the DOXP/MEP pathway for isoprenoid precursor biosynthesis. This is 4-hydroxy-3-methylbut-2-enyl diphosphate reductase from Zymomonas mobilis subsp. mobilis (strain ATCC 31821 / ZM4 / CP4).